A 191-amino-acid chain; its full sequence is Large ribosomal subunit protein uL6 (191 aa).

It belongs to the universal ribosomal protein uL6 family. Component of the large ribosomal subunit. Mature ribosomes consist of a small (40S) and a large (60S) subunit. The 40S subunit contains about 32 different proteins and 1 molecule of RNA (18S). The 60S subunit contains 45 different proteins and 3 molecules of RNA (25S, 5.8S and 5S).

It is found in the cytoplasm. Component of the ribosome, a large ribonucleoprotein complex responsible for the synthesis of proteins in the cell. The small ribosomal subunit (SSU) binds messenger RNAs (mRNAs) and translates the encoded message by selecting cognate aminoacyl-transfer RNA (tRNA) molecules. The large subunit (LSU) contains the ribosomal catalytic site termed the peptidyl transferase center (PTC), which catalyzes the formation of peptide bonds, thereby polymerizing the amino acids delivered by tRNAs into a polypeptide chain. The nascent polypeptides leave the ribosome through a tunnel in the LSU and interact with protein factors that function in enzymatic processing, targeting, and the membrane insertion of nascent chains at the exit of the ribosomal tunnel. The protein is Large ribosomal subunit protein uL6 of Candida albicans (strain SC5314 / ATCC MYA-2876) (Yeast).